A 163-amino-acid polypeptide reads, in one-letter code: Nucleotide-binding protein BA_1166 (163 aa).

It belongs to the YajQ family.

In terms of biological role, nucleotide-binding protein. This chain is Nucleotide-binding protein BA_1166, found in Bacillus anthracis.